A 413-amino-acid polypeptide reads, in one-letter code: MQKRVVILLLDSFGIGASEDAKDFGDLGANTLGNIAKACFNNLADSNDRKGALKLPYLESLGLGLSALKATNELPLGFESKPNLIGAYAYAKELSSAKDTISGHWEMMGAPVLFEWGYFKDKNNSFPKEILDEIMRKTKIKGYLGNCHASGTEIIKDLGEKHLETLYPIFYTSADSVFQIAVHEEKFGLDNLYALCEEAFQILEPLKIARVIARPFIGANREDFKRTANRKDYAIKPHKKLLFETFIEEKQGEVISIGKIADIYAHVGITQKFKAGSLMELCDVTLEQIKNAKNNSLIFTNFVHFDSDYGHRRDISGYANALEYFDARLKEILDNLKENDLLILCADHGCDPSFKGTDHTREYIPVLFYHKDLQPAFLGKSESFADIGQSIAYFLGLSPLDYGKNLLNFKGQP.

Mn(2+) is bound by residues Asp11, Asp306, His311, Asp347, His348, and His359.

This sequence belongs to the phosphopentomutase family. Requires Mn(2+) as cofactor.

It localises to the cytoplasm. The catalysed reaction is 2-deoxy-alpha-D-ribose 1-phosphate = 2-deoxy-D-ribose 5-phosphate. The enzyme catalyses alpha-D-ribose 1-phosphate = D-ribose 5-phosphate. The protein operates within carbohydrate degradation; 2-deoxy-D-ribose 1-phosphate degradation; D-glyceraldehyde 3-phosphate and acetaldehyde from 2-deoxy-alpha-D-ribose 1-phosphate: step 1/2. Isomerase that catalyzes the conversion of deoxy-ribose 1-phosphate (dRib-1-P) and ribose 1-phosphate (Rib-1-P) to deoxy-ribose 5-phosphate (dRib-5-P) and ribose 5-phosphate (Rib-5-P), respectively. The chain is Phosphopentomutase from Helicobacter pylori (strain HPAG1).